A 347-amino-acid polypeptide reads, in one-letter code: DNA-directed RNA polymerase subunit alpha (347 aa).

The segment at 1–243 is alpha N-terminal domain (alpha-NTD); it reads MLIKQGERLI…DQISVFINFD (243 aa). Residues 260 to 347 form an alpha C-terminal domain (alpha-CTD) region; the sequence is VNEHLFKSID…EWKRKQQNEA (88 aa).

This sequence belongs to the RNA polymerase alpha chain family. As to quaternary structure, homodimer. The RNAP catalytic core consists of 2 alpha, 1 beta, 1 beta' and 1 omega subunit. When a sigma factor is associated with the core the holoenzyme is formed, which can initiate transcription.

The enzyme catalyses RNA(n) + a ribonucleoside 5'-triphosphate = RNA(n+1) + diphosphate. In terms of biological role, DNA-dependent RNA polymerase catalyzes the transcription of DNA into RNA using the four ribonucleoside triphosphates as substrates. This Desulfovibrio desulfuricans (strain ATCC 27774 / DSM 6949 / MB) protein is DNA-directed RNA polymerase subunit alpha.